Reading from the N-terminus, the 234-residue chain is MMTYYFIADLHLNESQPQITHQFLQFMQQKAPLAQAVYILGDFFDFWIGDDEQSVLISQVKLALKKLTASGVKCYFICGNRDFLLGQTFAQQTGIQLLADYHLLDLFGERTLLCHGDTLCIDDIKYQQFRRRVHQKRLQKLFLWLPLTLRIKIAQKIRRKSKQDKKNKSADIMDVNQAFTAQKVHQYGATHLIHGHTHRQAVHFEQNFTRIVLGDWRPDRSSILKVDEKGFEFL.

The Mn(2+) site is built by Asp-9, His-11, Asp-42, Asn-80, and His-115. 80–81 (NR) serves as a coordination point for substrate. 5 residues coordinate substrate: Asp-123, Ser-161, Lys-165, Lys-168, and His-196. Positions 196 and 198 each coordinate Mn(2+).

This sequence belongs to the LpxH family. Mn(2+) is required as a cofactor.

The protein resides in the cell inner membrane. The enzyme catalyses UDP-2-N,3-O-bis[(3R)-3-hydroxytetradecanoyl]-alpha-D-glucosamine + H2O = 2-N,3-O-bis[(3R)-3-hydroxytetradecanoyl]-alpha-D-glucosaminyl 1-phosphate + UMP + 2 H(+). The protein operates within glycolipid biosynthesis; lipid IV(A) biosynthesis; lipid IV(A) from (3R)-3-hydroxytetradecanoyl-[acyl-carrier-protein] and UDP-N-acetyl-alpha-D-glucosamine: step 4/6. Hydrolyzes the pyrophosphate bond of UDP-2,3-diacylglucosamine to yield 2,3-diacylglucosamine 1-phosphate (lipid X) and UMP by catalyzing the attack of water at the alpha-P atom. Involved in the biosynthesis of lipid A, a phosphorylated glycolipid that anchors the lipopolysaccharide to the outer membrane of the cell. This is UDP-2,3-diacylglucosamine hydrolase from Haemophilus ducreyi (strain 35000HP / ATCC 700724).